Consider the following 318-residue polypeptide: Lipoyl synthase 1 (318 aa).

Positions 6–32 (DTISNPLRPRHPEKVNRPDSASPPKPD) are disordered. [4Fe-4S] cluster is bound by residues Cys60, Cys65, Cys71, Cys86, Cys90, Cys93, and Ser299. In terms of domain architecture, Radical SAM core spans 72–288 (WDKKHATFMI…EKVAYTKGFL (217 aa)).

Belongs to the radical SAM superfamily. Lipoyl synthase family. Requires [4Fe-4S] cluster as cofactor.

It localises to the cytoplasm. The enzyme catalyses [[Fe-S] cluster scaffold protein carrying a second [4Fe-4S](2+) cluster] + N(6)-octanoyl-L-lysyl-[protein] + 2 oxidized [2Fe-2S]-[ferredoxin] + 2 S-adenosyl-L-methionine + 4 H(+) = [[Fe-S] cluster scaffold protein] + N(6)-[(R)-dihydrolipoyl]-L-lysyl-[protein] + 4 Fe(3+) + 2 hydrogen sulfide + 2 5'-deoxyadenosine + 2 L-methionine + 2 reduced [2Fe-2S]-[ferredoxin]. It participates in protein modification; protein lipoylation via endogenous pathway; protein N(6)-(lipoyl)lysine from octanoyl-[acyl-carrier-protein]: step 2/2. Its function is as follows. Catalyzes the radical-mediated insertion of two sulfur atoms into the C-6 and C-8 positions of the octanoyl moiety bound to the lipoyl domains of lipoate-dependent enzymes, thereby converting the octanoylated domains into lipoylated derivatives. In Bradyrhizobium diazoefficiens (strain JCM 10833 / BCRC 13528 / IAM 13628 / NBRC 14792 / USDA 110), this protein is Lipoyl synthase 1.